A 469-amino-acid chain; its full sequence is tRNA(Ile)-lysidine synthase (469 aa).

Ser-26–Ser-31 contacts ATP.

This sequence belongs to the tRNA(Ile)-lysidine synthase family.

It is found in the cytoplasm. It catalyses the reaction cytidine(34) in tRNA(Ile2) + L-lysine + ATP = lysidine(34) in tRNA(Ile2) + AMP + diphosphate + H(+). Functionally, ligates lysine onto the cytidine present at position 34 of the AUA codon-specific tRNA(Ile) that contains the anticodon CAU, in an ATP-dependent manner. Cytidine is converted to lysidine, thus changing the amino acid specificity of the tRNA from methionine to isoleucine. The protein is tRNA(Ile)-lysidine synthase of Clostridium perfringens (strain 13 / Type A).